The following is a 764-amino-acid chain: Nucleolar transcription factor 1 (764 aa).

Residue Met1 is modified to N-acetylmethionine. The disordered stretch occupies residues 1–21; the sequence is MNGEADCPTDLEMAAPKGQDR. DNA-binding regions (HMG box) lie at residues 112 to 180 and 196 to 264; these read PKKP…ARFR and PEKP…RDYI. Thr201 carries the post-translational modification Phosphothreonine. 3 positions are modified to phosphoserine: Ser273, Ser336, and Ser364. Residues 298 to 362 constitute a DNA-binding region (HMG box 3); the sequence is TKPPPNSYSL…DYEVELLRFL (65 aa). Positions 370–379 are enriched in basic and acidic residues; it reads QQRVLGEEKM. The tract at residues 370-411 is disordered; it reads QQRVLGEEKMLNINKKQTTSPASKKPSQEGGKGGSEKPKRPV. 9 positions are modified to phosphoserine: Ser389, Ser412, Ser433, Ser435, Ser484, Ser495, Ser546, Ser584, and Ser638. 3 consecutive DNA-binding regions (HMG box) follow at residues 407 to 475, 482 to 549, and 568 to 634; these read PKRP…GGER, PESP…SEMR, and KKPP…DLWV. Residues 456–488 are disordered; it reads YKAREAALKAQSERKPGGEREDRGKLPESPKRA. Over residues 457–488 the composition is skewed to basic and acidic residues; the sequence is KAREAALKAQSERKPGGEREDRGKLPESPKRA. The interval 546–576 is disordered; that stretch reads SEMRAPPAATNSSKKMKFQGEPKKPPMNGYQ. The interval 648–764 is disordered; sequence YISNKRKNMT…SGDSSDSDSN (117 aa). Residues 664–674 show a composition bias toward polar residues; sequence PKSSRTTLQSK. Residues 677 to 745 show a composition bias toward acidic residues; the sequence is SEEDDDEEDD…DDDEDEDNES (69 aa). Residues 746-758 are compositionally biased toward low complexity; the sequence is EGSSSSSSSSGDS.

As to quaternary structure, homodimer. Part of Pol I pre-initiation complex (PIC), in which Pol I core assembles with RRN3 and promoter-bound UTBF and SL1/TIF-IB complex. Interacts with TOP2A in the context of Pol I complex. Interacts with TBP. Interacts with TAF1A. Interacts with PHF6. Interacts with CEBPA (isoform 1 and isoform 4). Interacts with DDX11. Interacts with NOP53. Interacts with RASL11A. Interacts with DHX33. Binds to IRS1 and PIK3CA. Interacts with ALKBH2. Phosphorylated and activated by PIK3CA.

The protein localises to the nucleus. Its subcellular location is the nucleolus. In terms of biological role, recognizes the ribosomal RNA gene promoter and activates transcription mediated by RNA polymerase I through cooperative interactions with the transcription factor SL1/TIF-IB complex. It binds specifically to the upstream control element. The sequence is that of Nucleolar transcription factor 1 (Ubtf) from Rattus norvegicus (Rat).